A 193-amino-acid polypeptide reads, in one-letter code: Molybdopterin synthase catalytic subunit (193 aa).

Substrate is bound by residues 118–119, Lys-134, and 141–143; these read HR and KKE. Residues 159 to 193 form a disordered region; the sequence is DRTTTDGTTASSPAPATRPAKGGGCCGRKVRVNES. The span at 163-178 shows a compositional bias: low complexity; sequence TDGTTASSPAPATRPA.

Belongs to the MoaE family. MOCS2B subfamily. Heterotetramer; composed of 2 small (MOCS2A) and 2 large (MOCS2B) subunits.

It is found in the cytoplasm. It carries out the reaction 2 [molybdopterin-synthase sulfur-carrier protein]-C-terminal-Gly-aminoethanethioate + cyclic pyranopterin phosphate + H2O = molybdopterin + 2 [molybdopterin-synthase sulfur-carrier protein]-C-terminal Gly-Gly + 2 H(+). The protein operates within cofactor biosynthesis; molybdopterin biosynthesis. Functionally, catalytic subunit of the molybdopterin synthase complex, a complex that catalyzes the conversion of precursor Z into molybdopterin. Acts by mediating the incorporation of 2 sulfur atoms from thiocarboxylated MOCS2A into precursor Z to generate a dithiolene group. This is Molybdopterin synthase catalytic subunit from Oryza sativa subsp. japonica (Rice).